We begin with the raw amino-acid sequence, 239 residues long: Uridylate kinase (239 aa).

10–13 (KFSG) lines the ATP pocket. The interval 18–23 (GENGFG) is involved in allosteric activation by GTP. Gly52 lines the UMP pocket. Positions 53 and 57 each coordinate ATP. UMP contacts are provided by residues Asp73 and 134–141 (TGNPYFTT). ATP-binding residues include Thr161, Tyr167, and Asp170.

This sequence belongs to the UMP kinase family. Homohexamer.

The protein localises to the cytoplasm. The enzyme catalyses UMP + ATP = UDP + ADP. It participates in pyrimidine metabolism; CTP biosynthesis via de novo pathway; UDP from UMP (UMPK route): step 1/1. With respect to regulation, allosterically activated by GTP. Inhibited by UTP. Functionally, catalyzes the reversible phosphorylation of UMP to UDP. This Campylobacter jejuni subsp. jejuni serotype O:6 (strain 81116 / NCTC 11828) protein is Uridylate kinase.